A 220-amino-acid polypeptide reads, in one-letter code: Small ribosomal subunit protein uS2 (220 aa).

The protein belongs to the universal ribosomal protein uS2 family.

This is Small ribosomal subunit protein uS2 from Methanococcus maripaludis (strain C5 / ATCC BAA-1333).